We begin with the raw amino-acid sequence, 367 residues long: Glutamate 5-kinase (367 aa).

Lys10 provides a ligand contact to ATP. The substrate site is built by Ser50, Asp137, and Asn149. ATP is bound by residues 169-170 and 211-217; these read TD and TGGMSTK. The PUA domain maps to 275 to 353; it reads AGEITVDEGA…QQIDAILGYE (79 aa).

It belongs to the glutamate 5-kinase family.

It localises to the cytoplasm. The enzyme catalyses L-glutamate + ATP = L-glutamyl 5-phosphate + ADP. It functions in the pathway amino-acid biosynthesis; L-proline biosynthesis; L-glutamate 5-semialdehyde from L-glutamate: step 1/2. Its function is as follows. Catalyzes the transfer of a phosphate group to glutamate to form L-glutamate 5-phosphate. This is Glutamate 5-kinase from Salmonella agona (strain SL483).